Reading from the N-terminus, the 429-residue chain is MFS-type efflux pump MSMEG_3705 (429 aa).

12 consecutive transmembrane segments (helical) span residues 21 to 41 (AWAA…DRFL), 59 to 79 (AIGV…GIAV), 86 to 106 (GAFG…TMLG), 115 to 137 (LALT…HAYV), 150 to 170 (LAVI…GGGL), 181 to 201 (FVIM…VVGV), 228 to 248 (FLIV…LTTF), 264 to 284 (VGVE…LIVG), 299 to 319 (LWIV…AFVV), 327 to 347 (LFLA…IAAI), 361 to 381 (AMFL…VGML), and 397 to 417 (ALLL…WLAS).

It belongs to the major facilitator superfamily.

It localises to the cell inner membrane. Its function is as follows. Probably plays a role in bacterial growth and resistance to antibiotics. The polypeptide is MFS-type efflux pump MSMEG_3705 (Mycolicibacterium smegmatis (strain ATCC 700084 / mc(2)155) (Mycobacterium smegmatis)).